The following is a 223-amino-acid chain: MFITFEGIDGAGKSTQVKMLRKLLISKGLEVLTLREPGGTDISESIRDILLEVKNDITPIGELLLFAASRAELVQKVIKPALSDHATVLLDRFYDSTSAYQGYGRGLDLALLHQINRIASCSLEPDITFYLDLSPEDAMIRKFSEKSLPLAFEDEELDRMERSGLEFYTRVRNGYQTIAASQPRRVVTIDATLEPDAIHRKITETIMSRRGSLLQKKEGGVEA.

7–14 (GIDGAGKS) serves as a coordination point for ATP.

Belongs to the thymidylate kinase family.

It carries out the reaction dTMP + ATP = dTDP + ADP. Its function is as follows. Phosphorylation of dTMP to form dTDP in both de novo and salvage pathways of dTTP synthesis. The polypeptide is Thymidylate kinase (Prosthecochloris aestuarii (strain DSM 271 / SK 413)).